The chain runs to 179 residues: Large ribosomal subunit protein uL5 (179 aa).

This sequence belongs to the universal ribosomal protein uL5 family. As to quaternary structure, part of the 50S ribosomal subunit; part of the 5S rRNA/L5/L18/L25 subcomplex. Contacts the 5S rRNA and the P site tRNA. Forms a bridge to the 30S subunit in the 70S ribosome.

In terms of biological role, this is one of the proteins that bind and probably mediate the attachment of the 5S RNA into the large ribosomal subunit, where it forms part of the central protuberance. In the 70S ribosome it contacts protein S13 of the 30S subunit (bridge B1b), connecting the 2 subunits; this bridge is implicated in subunit movement. Contacts the P site tRNA; the 5S rRNA and some of its associated proteins might help stabilize positioning of ribosome-bound tRNAs. The protein is Large ribosomal subunit protein uL5 of Natranaerobius thermophilus (strain ATCC BAA-1301 / DSM 18059 / JW/NM-WN-LF).